The following is a 248-amino-acid chain: Acyl-coenzyme A thioesterase THEM5 (248 aa).

Asp-167 functions as the Proton donor/acceptor in the catalytic mechanism.

This sequence belongs to the THEM4/THEM5 thioesterase family. Homodimer.

It is found in the mitochondrion matrix. The enzyme catalyses hexadecanoyl-CoA + H2O = hexadecanoate + CoA + H(+). The catalysed reaction is (9Z,12Z)-octadecadienoyl-CoA + H2O = (9Z,12Z)-octadecadienoate + CoA + H(+). It carries out the reaction tetradecanoyl-CoA + H2O = tetradecanoate + CoA + H(+). It catalyses the reaction (9Z)-octadecenoyl-CoA + H2O = (9Z)-octadecenoate + CoA + H(+). The enzyme catalyses (9Z)-hexadecenoyl-CoA + H2O = (9Z)-hexadecenoate + CoA + H(+). The catalysed reaction is (5Z,8Z,11Z,14Z)-eicosatetraenoyl-CoA + H2O = (5Z,8Z,11Z,14Z)-eicosatetraenoate + CoA + H(+). It carries out the reaction octadecanoyl-CoA + H2O = octadecanoate + CoA + H(+). Its function is as follows. Has acyl-CoA thioesterase activity towards long-chain (C16 and C18) fatty acyl-CoA substrates, with a preference for linoleoyl-CoA and other unsaturated long-chain fatty acid-CoA esters. Plays an important role in mitochondrial fatty acid metabolism, and in remodeling of the mitochondrial lipid cardiolipin. Required for normal mitochondrial function. In Mus musculus (Mouse), this protein is Acyl-coenzyme A thioesterase THEM5 (Them5).